A 325-amino-acid polypeptide reads, in one-letter code: Replication factor C small subunit (325 aa).

54 to 61 (GPAGTGKT) contributes to the ATP binding site.

The protein belongs to the activator 1 small subunits family. RfcS subfamily. Heteromultimer composed of small subunits (RfcS) and large subunits (RfcL).

Its function is as follows. Part of the RFC clamp loader complex which loads the PCNA sliding clamp onto DNA. In Haloarcula marismortui (strain ATCC 43049 / DSM 3752 / JCM 8966 / VKM B-1809) (Halobacterium marismortui), this protein is Replication factor C small subunit.